The following is a 535-amino-acid chain: Peptide chain release factor 3 (535 aa).

Residues 8–278 form the tr-type G domain; that stretch reads ARRRTFAIIS…VDQAPAPGPR (271 aa). Residues 17-24, 85-89, and 139-142 each bind GTP; these read SHPDAGKT, DTPGH, and NKLD.

The protein belongs to the TRAFAC class translation factor GTPase superfamily. Classic translation factor GTPase family. PrfC subfamily.

The protein resides in the cytoplasm. Its function is as follows. Increases the formation of ribosomal termination complexes and stimulates activities of RF-1 and RF-2. It binds guanine nucleotides and has strong preference for UGA stop codons. It may interact directly with the ribosome. The stimulation of RF-1 and RF-2 is significantly reduced by GTP and GDP, but not by GMP. The protein is Peptide chain release factor 3 of Bordetella bronchiseptica (strain ATCC BAA-588 / NCTC 13252 / RB50) (Alcaligenes bronchisepticus).